Consider the following 162-residue polypeptide: Ribosomal RNA large subunit methyltransferase H (162 aa).

S-adenosyl-L-methionine contacts are provided by residues L78, G109, and 128 to 133; that span reads LSALTL.

Belongs to the RNA methyltransferase RlmH family. Homodimer.

The protein localises to the cytoplasm. The catalysed reaction is pseudouridine(1915) in 23S rRNA + S-adenosyl-L-methionine = N(3)-methylpseudouridine(1915) in 23S rRNA + S-adenosyl-L-homocysteine + H(+). In terms of biological role, specifically methylates the pseudouridine at position 1915 (m3Psi1915) in 23S rRNA. The sequence is that of Ribosomal RNA large subunit methyltransferase H from Psychrobacter cryohalolentis (strain ATCC BAA-1226 / DSM 17306 / VKM B-2378 / K5).